The primary structure comprises 1304 residues: TPR-containing protein DDB_G0280363 (1304 aa).

Disordered regions lie at residues 19–85, 153–195, 296–334, 447–477, 576–687, and 706–728; these read QQHH…HPQQ, NINN…NSSL, LPST…YTQQ, GFNW…QRQQ, QNQQ…VTTI, and LTTV…VESP. Low complexity-rich tracts occupy residues 25 to 44, 52 to 85, and 153 to 194; these read QQNN…QFNQ, HQQH…HPQQ, and NINN…NNSS. Residues 296–306 are compositionally biased toward polar residues; sequence LPSTNSSIVSR. Low complexity predominate over residues 307-316; that stretch reads QQQLQQQQQK. The segment covering 448–465 has biased composition (polar residues); the sequence is FNWSPSLQPDQSTSTNHT. Low complexity-rich tracts occupy residues 466-477 and 576-597; these read QAMLQQQQQRQQ and QNQQ…PNQH. A compositionally biased stretch (basic residues) spans 598–625; that stretch reads HGQHQHNQHNQHHNQHHNQSHPNHKNQH. Residues 626–687 are compositionally biased toward low complexity; the sequence is QKQNQTQQST…NNNTNNVTTI (62 aa). TPR repeat units lie at residues 769–802, 899–932, 978–1011, 1046–1079, 1084–1111, 1112–1150, and 1152–1184; these read WRVY…QPYI, MKHV…VEKG, WKIY…CPEN, SKLR…AHVE, WKVF…KESL, KIHS…VPKS, and EVWC…TPQF.

The polypeptide is TPR-containing protein DDB_G0280363 (Dictyostelium discoideum (Social amoeba)).